The primary structure comprises 240 residues: Agamous-like MADS-box protein AGL16 (240 aa).

One can recognise an MADS-box domain in the interval 1–61; sequence MGRGKIAIKR…GRLYDFSSSS (61 aa). Residues 86-176 form the K-box domain; that stretch reads IQFWQKEAAI…HKKVNLMHQQ (91 aa).

In terms of assembly, homodimer. Interacts with AGL15, AGL24, AP1, AGL6, AG, AGL1, AGL11, AGL5, SEP3, SEP1, AGL63, AGL14, SOC1 and AGL21. Interacts with AGL63. Interacts with SVP. Expressed at high levels in leaves, moderate levels in roots, seedlings and stems, and at low levels in flowers, pollen and siliques. Accumulates in leaf guard cells and trichomes. Also present in epidermal cells of roots. Expressed in mature guard cells.

The protein resides in the nucleus. Probable transcription factor involved in the regulation of flowering time in long-day photoperiod. Participates in the repression of FT expression and floral transition, by interacting closely with the FLC-SVP pathways. Functions in the satellite meristemoid lineage of stomatal development. This is Agamous-like MADS-box protein AGL16 (AGL16) from Arabidopsis thaliana (Mouse-ear cress).